A 339-amino-acid polypeptide reads, in one-letter code: MRVYYDRDADINLIKSKKVAIIGYGSQGHAHALNLRDSGVMDVSVALREGSATAAKAAGEGLKVLSVADAAKWADVVMMLTPDELQGDIYSEHLAPNLKQGAALLFAHGLNIHFNLIEPRKDLDVAMVAPKGPGHTVRSEYKRGGGVPCLIAIAQDASGNAHDIALSYASAIGGGRAGIIETTFREECETDLFGEQVVLCGGLVELIRGGFETLVEAGYAPEMAYFECLHEVKLIVDLIYEGGIANMNYSISNTAEYGEYVTGPRIVTPETKAEMKRVLTDIQSGKFTRDWMLENKVNQTSFKATRAKAASHQIEEVGAKLRAMMPWIGANKLVDKAKN.

The region spanning 1–182 (MRVYYDRDAD…GGGRAGIIET (182 aa)) is the KARI N-terminal Rossmann domain. NADP(+) is bound by residues 24–27 (YGSQ), Arg-48, Ser-51, Thr-53, and 83–86 (DELQ). Residue His-108 is part of the active site. Gly-134 is an NADP(+) binding site. The 146-residue stretch at 183 to 328 (TFREECETDL…AKLRAMMPWI (146 aa)) folds into the KARI C-terminal knotted domain. Residues Asp-191, Glu-195, Glu-227, and Glu-231 each contribute to the Mg(2+) site. A substrate-binding site is contributed by Ser-252.

Belongs to the ketol-acid reductoisomerase family. Mg(2+) is required as a cofactor.

The enzyme catalyses (2R)-2,3-dihydroxy-3-methylbutanoate + NADP(+) = (2S)-2-acetolactate + NADPH + H(+). It carries out the reaction (2R,3R)-2,3-dihydroxy-3-methylpentanoate + NADP(+) = (S)-2-ethyl-2-hydroxy-3-oxobutanoate + NADPH + H(+). It participates in amino-acid biosynthesis; L-isoleucine biosynthesis; L-isoleucine from 2-oxobutanoate: step 2/4. It functions in the pathway amino-acid biosynthesis; L-valine biosynthesis; L-valine from pyruvate: step 2/4. Functionally, involved in the biosynthesis of branched-chain amino acids (BCAA). Catalyzes an alkyl-migration followed by a ketol-acid reduction of (S)-2-acetolactate (S2AL) to yield (R)-2,3-dihydroxy-isovalerate. In the isomerase reaction, S2AL is rearranged via a Mg-dependent methyl migration to produce 3-hydroxy-3-methyl-2-ketobutyrate (HMKB). In the reductase reaction, this 2-ketoacid undergoes a metal-dependent reduction by NADPH to yield (R)-2,3-dihydroxy-isovalerate. This is Ketol-acid reductoisomerase (NADP(+)) from Methylocella silvestris (strain DSM 15510 / CIP 108128 / LMG 27833 / NCIMB 13906 / BL2).